We begin with the raw amino-acid sequence, 440 residues long: Methylenetetrahydrofolate--tRNA-(uracil-5-)-methyltransferase TrmFO (440 aa).

FAD is bound at residue 14–19 (GAGLAG).

The protein belongs to the MnmG family. TrmFO subfamily. FAD serves as cofactor.

The protein localises to the cytoplasm. It catalyses the reaction uridine(54) in tRNA + (6R)-5,10-methylene-5,6,7,8-tetrahydrofolate + NADH + H(+) = 5-methyluridine(54) in tRNA + (6S)-5,6,7,8-tetrahydrofolate + NAD(+). The enzyme catalyses uridine(54) in tRNA + (6R)-5,10-methylene-5,6,7,8-tetrahydrofolate + NADPH + H(+) = 5-methyluridine(54) in tRNA + (6S)-5,6,7,8-tetrahydrofolate + NADP(+). Functionally, catalyzes the folate-dependent formation of 5-methyl-uridine at position 54 (M-5-U54) in all tRNAs. This is Methylenetetrahydrofolate--tRNA-(uracil-5-)-methyltransferase TrmFO from Bdellovibrio bacteriovorus (strain ATCC 15356 / DSM 50701 / NCIMB 9529 / HD100).